A 112-amino-acid polypeptide reads, in one-letter code: Tyrosine-protein phosphatase 17 (112 aa).

The Tyrosine-protein phosphatase domain maps to 1–112 (WRMIWEHECC…QPHTAGPIVV (112 aa)). Aspartate 82 serves as a coordination point for substrate.

The protein belongs to the protein-tyrosine phosphatase family.

It catalyses the reaction O-phospho-L-tyrosyl-[protein] + H2O = L-tyrosyl-[protein] + phosphate. This chain is Tyrosine-protein phosphatase 17 (STY-17), found in Styela plicata (Wrinkled sea squirt).